The chain runs to 1243 residues: ATP-dependent helicase/nuclease subunit A (1243 aa).

The region spanning 2 to 475 is the UvrD-like helicase ATP-binding domain; sequence VNWTKEQEEA…IDLARNFRSR (474 aa). 23–30 is a binding site for ATP; it reads AAAGSGKT. Positions 502–803 constitute a UvrD-like helicase C-terminal domain; it reads AAELIYGNKM…RIMTIHKSKG (302 aa).

This sequence belongs to the helicase family. AddA subfamily. Heterodimer of AddA and AddB/RexB. The cofactor is Mg(2+).

The catalysed reaction is Couples ATP hydrolysis with the unwinding of duplex DNA by translocating in the 3'-5' direction.. It catalyses the reaction ATP + H2O = ADP + phosphate + H(+). Functionally, the heterodimer acts as both an ATP-dependent DNA helicase and an ATP-dependent, dual-direction single-stranded exonuclease. Recognizes the chi site generating a DNA molecule suitable for the initiation of homologous recombination. The AddA nuclease domain is required for chi fragment generation; this subunit has the helicase and 3' -&gt; 5' nuclease activities. The protein is ATP-dependent helicase/nuclease subunit A of Oceanobacillus iheyensis (strain DSM 14371 / CIP 107618 / JCM 11309 / KCTC 3954 / HTE831).